A 410-amino-acid chain; its full sequence is Lipid droplet-regulating VLDL assembly factor AUP1 (410 aa).

An N-acetylmethionine modification is found at M1. The Cytoplasmic portion of the chain corresponds to 1-20; the sequence is MEPPPAPGPERLFDSHRLPS. An intramembrane segment occupies 21-41; sequence DGFLLLALLLYAPVGLCLLVL. Residues 42-410 are Cytoplasmic-facing; that stretch reads RLFLGLHVFL…FRERQAQEAE (369 aa). Residues 259–293 form a disordered region; sequence LTPADKAEHMKRQRHPRLRPQSVQSSFPSPPSPSS. The residue at position 292 (S292) is a Phosphoserine. Residues 296 to 338 enclose the CUE domain; it reads QLTILAQRVKEVLPHVPLNVIQRDLARTGCVDLTITNLLEGAV. The interval 348-367 is disordered; sequence GSQSLPTASAPKFPSSGLVT. Residue S363 is modified to Phosphoserine. T367 is subject to Phosphothreonine.

The protein belongs to the AUP1 family. In terms of assembly, identified in a complex that contains SEL1L, OS9, FAF2/UBXD8, UBE2J1/UBC6E and AUP1. Interacts with the cytoplasmic tail of ITGA2B, ITGA1, ITGA2, ITGA5, ITGAV and ITGAM. Interacts (via C-terminus) with UBE2G2; the interaction recruits UBE2G2 to lipid droplets. Interacts with ubiquitin ligases AMFR/gp78 and RNF139/TRC8; this promotes interaction of UBE2G2 with AMFR and RNF139. Interacts with apolipoprotein APOB. In terms of processing, monoubiquitinated and diubiquitinated.

The protein localises to the endoplasmic reticulum membrane. It localises to the lipid droplet. Functionally, plays a role in the translocation of terminally misfolded proteins from the endoplasmic reticulum lumen to the cytoplasm and their degradation by the proteasome. Plays a role in lipid droplet formation. Induces lipid droplet clustering. Recruits ubiquitin-conjugating enzyme UBE2G2 to lipid droplets which facilitates its interaction with ubiquitin ligases AMFR/gp78 and RNF139/TRC8, leading to sterol-induced ubiquitination of HMGCR and its subsequent proteasomal degradation. Also required for the degradation of INSIG1, SREBF1 and SREBF2. Plays a role in regulating assembly and secretion of very low density lipoprotein particles and stability of apolipoprotein APOB. The protein is Lipid droplet-regulating VLDL assembly factor AUP1 of Rattus norvegicus (Rat).